The primary structure comprises 435 residues: Chromosomal replication initiator protein DnaA (435 aa).

Residues 1–70 (MNIGEKILLL…KHLFEIQNSI (70 aa)) form a domain I, interacts with DnaA modulators region. The interval 70 to 98 (IKVDVSILLKNQVESKKAEQKSVQKQQHS) is domain II. The tract at residues 99–313 (LLNPSHTFEN…GILSKLHAYS (215 aa)) is domain III, AAA+ region. ATP is bound by residues Gly143, Gly145, Lys146, and Thr147. A domain IV, binds dsDNA region spans residues 314–435 (QLMHVDIDLQ…ELTNKITSSS (122 aa)).

Belongs to the DnaA family. As to quaternary structure, oligomerizes as a right-handed, spiral filament on DNA at oriC.

It is found in the cytoplasm. Plays an essential role in the initiation and regulation of chromosomal replication. ATP-DnaA binds to the origin of replication (oriC) to initiate formation of the DNA replication initiation complex once per cell cycle. Binds the DnaA box (a 9 base pair repeat at the origin) and separates the double-stranded (ds)DNA. Forms a right-handed helical filament on oriC DNA; dsDNA binds to the exterior of the filament while single-stranded (ss)DNA is stabiized in the filament's interior. The ATP-DnaA-oriC complex binds and stabilizes one strand of the AT-rich DNA unwinding element (DUE), permitting loading of DNA polymerase. After initiation quickly degrades to an ADP-DnaA complex that is not apt for DNA replication. Binds acidic phospholipids. The chain is Chromosomal replication initiator protein DnaA from Sulfurimonas denitrificans (strain ATCC 33889 / DSM 1251) (Thiomicrospira denitrificans (strain ATCC 33889 / DSM 1251)).